A 271-amino-acid polypeptide reads, in one-letter code: Probable CAAX prenyl protease 2 (271 aa).

Transmembrane regions (helical) follow at residues valine 3–valine 23 and cysteine 42–proline 62. Residues glutamate 126 and histidine 160 each act as proton donor/acceptor in the active site. The next 2 helical transmembrane spans lie at alanine 174–tryptophan 194 and isoleucine 236–aspartate 256.

It belongs to the peptidase U48 family.

It is found in the endoplasmic reticulum membrane. The enzyme catalyses Hydrolyzes the peptide bond -P2-(S-farnesyl or geranylgeranyl)C-P1'-P2'-P3'-COOH where P1' and P2' are amino acids with aliphatic sidechains and P3' is any C-terminal residue.. Functionally, protease involved in the processing of a variety of prenylated proteins containing the C-terminal CAAX motif, where C is a cysteine modified with an isoprenoid lipid, A is an aliphatic amino acid and X is any C-terminal amino acid. Proteolytically removes the C-terminal three residues of farnesylated proteins, leaving the prenylated cysteine as the new C-terminus. The chain is Probable CAAX prenyl protease 2 from Schizosaccharomyces pombe (strain 972 / ATCC 24843) (Fission yeast).